The sequence spans 60 residues: MAVPKKKTSKSRKNMRRAHDFLTAPAASVCPQCKSPKLPHRACASCGTYKGREVVKTEEI.

It belongs to the bacterial ribosomal protein bL32 family.

This is Large ribosomal subunit protein bL32 from Geobacter sulfurreducens (strain ATCC 51573 / DSM 12127 / PCA).